Reading from the N-terminus, the 300-residue chain is Estradiol 17-beta-dehydrogenase 11 (300 aa).

Positions 1 to 19 (MKFLLDILLLLPLLIVCSL) are cleaved as a signal peptide. An NADP(+)-binding site is contributed by 40–64 (LITGAGHGIGRLTAYEFAKLKSKLV). Substrate is bound at residue Ser-172. Catalysis depends on Tyr-185, which acts as the Proton acceptor.

It belongs to the short-chain dehydrogenases/reductases (SDR) family. 17-beta-HSD 3 subfamily. In terms of tissue distribution, present at high level in steroidogenic cells such as syncytiotrophoblasts, sebaceous gland, Leydig cells, and granulosa cells of the dominant follicle and corpus luteum. In lung, it is detected in the ciliated epithelium and in acini of adult trachea, in bronchioles, but not in alveoli. In the eye, it is detected in the nonpigmented epithelium of the ciliary body and, at lower level, in the inner nuclear layer of the retina (at protein level). Widely expressed. Highly expressed in retina, pancreas, kidney, liver, lung, adrenal, small intestine, ovary and heart.

It localises to the endoplasmic reticulum. Its subcellular location is the lipid droplet. The catalysed reaction is 17beta-estradiol + NAD(+) = estrone + NADH + H(+). It carries out the reaction 17beta-estradiol + NADP(+) = estrone + NADPH + H(+). Its function is as follows. Can convert androstan-3-alpha,17-beta-diol (3-alpha-diol) to androsterone in vitro, suggesting that it may participate in androgen metabolism during steroidogenesis. May act by metabolizing compounds that stimulate steroid synthesis and/or by generating metabolites that inhibit it. Has no activity toward DHEA (dehydroepiandrosterone), or A-dione (4-androste-3,17-dione), and only a slight activity toward testosterone to A-dione. Tumor-associated antigen in cutaneous T-cell lymphoma. The sequence is that of Estradiol 17-beta-dehydrogenase 11 (HSD17B11) from Homo sapiens (Human).